The primary structure comprises 422 residues: Keratin, type I cytoskeletal 23 (422 aa).

Residues 1–24 (MNSSHSFNQTYSASVHSLGSTRGR) are compositionally biased toward polar residues. Residues 1–35 (MNSSHSFNQTYSASVHSLGSTRGRQGSCHRAPSVH) form a disordered region. Residues 1–71 (MNSSHSFNQT…GRSSPLLGGN (71 aa)) form a head region. Positions 72–107 (GKATMQNLNDRLATYLEKVRALEEANSKLETRILRW) are coil 1A. Positions 72–382 (GKATMQNLND…RLLEGDTEGT (311 aa)) constitute an IF rod domain. Residues 108 to 125 (HQEREPSHRKDYSQYEEN) are linker 1. Residues 126–217 (ISRLQEQIVD…KRHEQEMEEN (92 aa)) are coil 1B. Positions 218–240 (HLPSDFKVSVKVDTTPGEDLIKV) are linker 12. Residues 241-378 (LEDMRQEYEL…ATYRRLLEGD (138 aa)) are coil 2. Residues 379–422 (TEGTMDGSESRLKGSEASTIKAITQESVNGRIVLSQVNEIQKHI) are rod-like helical tail.

This sequence belongs to the intermediate filament family. As to quaternary structure, heterotetramer of two type I and two type II keratins.

The chain is Keratin, type I cytoskeletal 23 (Krt23) from Mus musculus (Mouse).